A 726-amino-acid polypeptide reads, in one-letter code: PWWP domain-containing protein 2 (726 aa).

The span at 1–10 (MSTESERIES) shows a compositional bias: basic and acidic residues. A disordered region spans residues 1-26 (MSTESERIESVSEANASSLEVGNDQM). Positions 12–26 (SEANASSLEVGNDQM) are enriched in polar residues. Residues 199 to 260 (DSDLVWAKVR…ASRIKPFRQH (62 aa)) enclose the PWWP domain. Residues 392-441 (APKISPAEEQSSLVEVSDPEPTKSKQVYTKRRKTNLQTEQSSLVEVSDPD) form a disordered region. The span at 426-435 (NLQTEQSSLV) shows a compositional bias: polar residues. Short sequence motifs (nuclear localization signal) lie at residues 460–467 (KKKEKTLA) and 495–502 (KKRKVVQS). Disordered regions lie at residues 472–545 (EKRV…PQKA) and 568–726 (TRLL…VSAE). Basic residues predominate over residues 494–512 (EKKRKVVQSKVPKSTKKIK). Residues 606-634 (SPSTTLSSPHAASVTKTTSGKSNSVSLDH) show a composition bias toward polar residues. The segment covering 658 to 688 (LESRDLKDSSKEQVVHEDKKEAANVADEKSI) has biased composition (basic and acidic residues).

Belongs to the PDP family. As to quaternary structure, interacts with DEK3. Binds to MSI4/FVE and MSI5. Component of the PRC2 (polycomb repressive complex 2) complex which regulates histone methylation on histone H3K27.

The protein resides in the nucleus. Its function is as follows. Together with PDP1, PDP3 and PDP6, interacts with MSI4/FVE and MSI5 to suppress FLC, MAF4 and MAF5 expression by regulating the function of the PRC2 complex and modulating H3K27me3 level, thereby promoting flowering. This is PWWP domain-containing protein 2 from Arabidopsis thaliana (Mouse-ear cress).